Consider the following 192-residue polypeptide: Ion-translocating oxidoreductase complex subunit B (192 aa).

Residues 1–26 (MNAIWIAVAAVSLLGLAFGAILGYAS) are hydrophobic. Positions 32–91 (EDDPVVEKIDEILPQSQCGQCGYPGCRPYAEAISCNGEKINRCAPGGEAVMLKIAELLNV) constitute a 4Fe-4S domain. Cys-49, Cys-52, Cys-57, Cys-74, Cys-117, Cys-120, Cys-123, Cys-127, Cys-147, Cys-150, Cys-153, and Cys-157 together coordinate [4Fe-4S] cluster. 2 consecutive 4Fe-4S ferredoxin-type domains span residues 108–137 (MVAVIDENNCIGCTKCIQACPVDAIVGATR) and 138–167 (AMHTVMSDLCTGCNLCVDPCPTHCISLQPV).

It belongs to the 4Fe4S bacterial-type ferredoxin family. RnfB subfamily. The complex is composed of six subunits: RsxA, RsxB, RsxC, RsxD, RsxE and RsxG. The cofactor is [4Fe-4S] cluster.

The protein resides in the cell inner membrane. In terms of biological role, part of a membrane-bound complex that couples electron transfer with translocation of ions across the membrane. Required to maintain the reduced state of SoxR. In Escherichia coli O139:H28 (strain E24377A / ETEC), this protein is Ion-translocating oxidoreductase complex subunit B.